Reading from the N-terminus, the 261-residue chain is Flagellar L-ring protein (261 aa).

Residues 1–18 (MAAMKRLLASSLLILLSG) form the signal peptide. Residue Cys19 is the site of N-palmitoyl cysteine attachment. Cys19 carries S-diacylglycerol cysteine lipidation. The segment at 37–67 (TVDAVEGDKSESNSGLTDALRNRTDPVAGDP) is disordered.

This sequence belongs to the FlgH family. The basal body constitutes a major portion of the flagellar organelle and consists of four rings (L,P,S, and M) mounted on a central rod.

The protein resides in the cell outer membrane. It localises to the bacterial flagellum basal body. In terms of biological role, assembles around the rod to form the L-ring and probably protects the motor/basal body from shearing forces during rotation. This is Flagellar L-ring protein from Vibrio cholerae serotype O1 (strain ATCC 39541 / Classical Ogawa 395 / O395).